Reading from the N-terminus, the 523-residue chain is MNRLCDSMEPKVMDDDMLKLAVGEQGPQEEAGQLAKQEGILFKDVLSLQLDFRNILRIDNLWQFENLRKLQLDNNIIEKIGGLENLTHLVWLDLSFNNIETIEGLDTLVNLEDLSLFNNRISKIDSLDALVKLQVLSLGNNQIDNMMNIVYLRRFQCLRTLSLSGNPISEAEDYKMFICAYLPDLVYLDFRRIDDHTKELAEAKHQYSIDELKHRENLMQVRLQDERARQEELEKHKTAFVEHLNGSFLFDSMYAEDSEGNKLSYLPGVSELLEAYKDKFVIICMNIFEYGLKQQEKRKIELDTFSECVHEAIQENQEQGKRKIAQFEEKHLSSLSAIREESELPNIEKMILECSADVSELFNELMMLEMQLVEQLEETINMFERNIVDMVGLFIENVQSLMAQCRDLENHHHEKLLEISISTLEKIVKGDLDEDLPDDLRALFVDKDTIVNAVGASHDIHLLKIDNREDELVTRINSWCTRLVDKIHKDEIMRNRKRVKEINQYIDHMQSELDNLEYSDILD.

5 LRR repeats span residues Asp-44–Glu-65, Asn-66–Thr-87, His-88–Val-109, Asn-110–Val-131, and Lys-132–Arg-153. The LRRCT domain maps to Asn-166–Gln-206. Residues Val-358–Val-391 are a coiled coil.

The protein belongs to the DRC3 family. As to quaternary structure, component of the nexin-dynein regulatory complex (N-DRC). Interacts with DRC1. Interacts with TCTE1/DRC5. Interacts with DRC7.

It localises to the cytoplasm. The protein resides in the cytoskeleton. Its subcellular location is the cilium axoneme. It is found in the cell projection. The protein localises to the cilium. It localises to the flagellum axoneme. The protein resides in the flagellum. Functionally, component of the nexin-dynein regulatory complex (N-DRC) a key regulator of ciliary/flagellar motility which maintains the alignment and integrity of the distal axoneme and regulates microtubule sliding in motile axonemes. In Macaca fascicularis (Crab-eating macaque), this protein is Dynein regulatory complex subunit 3 (DRC3).